Here is an 894-residue protein sequence, read N- to C-terminus: ABC-transporter-regulating transcription factor (894 aa).

A DNA-binding region (zn(2)-C6 fungal-type) is located at residues 71 to 98 (CDMCRKKKIKCDGKMPKCSHCINYRTDC). Positions 159-174 (NTALNSLKSPTNKFNG) are enriched in polar residues. A disordered region spans residues 159–219 (NTALNSLKSP…PKESETEVEG (61 aa)). Low complexity predominate over residues 175–189 (SSATSQSQHTTASRH). A compositionally biased stretch (polar residues) spans 199–210 (SPHTAATSPNSP). Residues 649 to 669 (CVWLILYYPVSALVTLFANIL) traverse the membrane as a helical segment. Residues 724 to 797 (AEKESHSKKK…MSNPTRAFAP (74 aa)) are disordered. A compositionally biased stretch (basic and acidic residues) spans 736–750 (AAPDEPQDLRQKTPD). 2 stretches are compositionally biased toward polar residues: residues 751–761 (ENSVPSPSTKR) and 771–792 (LFPSSSYPINLGNTGPDMSNPT).

The protein localises to the nucleus. The protein resides in the membrane. In terms of biological role, transcription factor that regulates expression of the genes related to resistance to azole compounds. This chain is ABC-transporter-regulating transcription factor, found in Aspergillus oryzae (strain ATCC 42149 / RIB 40) (Yellow koji mold).